Consider the following 106-residue polypeptide: Large ribosomal subunit protein uL24 (106 aa).

Belongs to the universal ribosomal protein uL24 family. As to quaternary structure, part of the 50S ribosomal subunit.

In terms of biological role, one of two assembly initiator proteins, it binds directly to the 5'-end of the 23S rRNA, where it nucleates assembly of the 50S subunit. Functionally, one of the proteins that surrounds the polypeptide exit tunnel on the outside of the subunit. The sequence is that of Large ribosomal subunit protein uL24 from Spiroplasma kunkelii.